The sequence spans 54 residues: Large ribosomal subunit protein bL33 (54 aa).

Belongs to the bacterial ribosomal protein bL33 family.

The chain is Large ribosomal subunit protein bL33 from Thermus thermophilus (strain ATCC BAA-163 / DSM 7039 / HB27).